A 529-amino-acid chain; its full sequence is Cytochrome P450 monooxygenase CLM2 (529 aa).

A helical transmembrane segment spans residues 2-19; it reads LLIIVVLVGTLIYFLSFH. N-linked (GlcNAc...) asparagine glycosylation is found at N244 and N281. Residue C438 participates in heme binding.

The protein belongs to the cytochrome P450 family. Heme is required as a cofactor.

The protein resides in the membrane. The enzyme catalyses (-)-longiborneol + reduced [NADPH--hemoprotein reductase] + O2 = culmorin + oxidized [NADPH--hemoprotein reductase] + H2O + H(+). It functions in the pathway mycotoxin biosynthesis. Cytochrome P450 monooxygenase involved in the biosynthesis of culmorin, a tricyclic sesquiterpene diol reported to have antifungal activity and some phytotoxicity to wheat coleoptile tissue, contributing to Fusarium head blight disease. The terpene cyclase CLM1 is responsible for the cyclization of farnesyl diphosphate into the intermediate longiborneol. Longiborneol is then hydroxylated in a regio- and endo-stereoselective manner at position C-11 by the cytochrome P450 monooxygenase CLM2 to produce culmorin. Additional non-specific oxygenases are also able to hydroxylate longiborneol at other sites than C-11 leading to 3-hydroxylongiborneol, 5-hydroxylongiborneol, 12-hydroxylongiborneol and 15-hydroxylongiborneol. Moreover, another oxygenase capable of installing a C-11 exo-hydroxy group in longiborneol can also yield 11-epi-acetylculmorin. The production of these longiborneol derivatives is dwarfed by the high abundance of culmorin, suggesting that CLM2 displays superior enzymatic activity to the unidentified, possibly promiscuous, additional oxygenases. The sequence is that of Cytochrome P450 monooxygenase CLM2 from Gibberella zeae (strain ATCC MYA-4620 / CBS 123657 / FGSC 9075 / NRRL 31084 / PH-1) (Wheat head blight fungus).